The following is a 374-amino-acid chain: MRCELLDYELPEALIASRPPEERDGARLLLVDRGRRAGEVEHAAIRDLDRYIERGALVIVNDTKVVPARLFGRKRGTGGQVELFLLHRLDGAPAGAEDLGGGPQESAPRSERWRAMGRASKPIRPGSVLDIERDGALVAEVLERAEDGVLTVQLSSPAGLSVAAAIDAYGHVPLPPYLGRGDDASDRERYQTIFARVPGAVAAPTAGLHLSPGLVERLRANGVEIASVTLHVGLGTFQPVTVDDLDLHPMHAEVYSIPDATAGAIAGARARGAPVIAIGTTVVRALESAADPARAGLVQAQSGETRLLIQPGYRFRVVDALLTNFHLPRSTLLALVFAFAGRERTLLAYRAAIDAGYRFYSYGDAMLIRGVDAP.

The protein belongs to the QueA family. Monomer.

Its subcellular location is the cytoplasm. The catalysed reaction is 7-aminomethyl-7-carbaguanosine(34) in tRNA + S-adenosyl-L-methionine = epoxyqueuosine(34) in tRNA + adenine + L-methionine + 2 H(+). Its pathway is tRNA modification; tRNA-queuosine biosynthesis. Its function is as follows. Transfers and isomerizes the ribose moiety from AdoMet to the 7-aminomethyl group of 7-deazaguanine (preQ1-tRNA) to give epoxyqueuosine (oQ-tRNA). This chain is S-adenosylmethionine:tRNA ribosyltransferase-isomerase, found in Sorangium cellulosum (strain So ce56) (Polyangium cellulosum (strain So ce56)).